The sequence spans 195 residues: NADH-quinone oxidoreductase subunit I (195 aa).

2 consecutive 4Fe-4S ferredoxin-type domains span residues 44-74 (LNRY…VEGA) and 90-119 (QVYQ…MTNE). Positions 54, 57, 60, 64, 99, 102, 105, and 109 each coordinate [4Fe-4S] cluster. The disordered stretch occupies residues 145-195 (MTAPPHALRPGTTQDDYYRGDITAVPEQAAPEQAAPEQPAPEREPNPETEK). The segment covering 168–181 (AVPEQAAPEQAAPE) has biased composition (low complexity). Residues 184–195 (APEREPNPETEK) are compositionally biased toward basic and acidic residues.

Belongs to the complex I 23 kDa subunit family. NDH-1 is composed of 14 different subunits. Subunits NuoA, H, J, K, L, M, N constitute the membrane sector of the complex. Requires [4Fe-4S] cluster as cofactor.

The protein localises to the cell membrane. It catalyses the reaction a quinone + NADH + 5 H(+)(in) = a quinol + NAD(+) + 4 H(+)(out). Its function is as follows. NDH-1 shuttles electrons from NADH, via FMN and iron-sulfur (Fe-S) centers, to quinones in the respiratory chain. The immediate electron acceptor for the enzyme in this species is believed to be ubiquinone. Couples the redox reaction to proton translocation (for every two electrons transferred, four hydrogen ions are translocated across the cytoplasmic membrane), and thus conserves the redox energy in a proton gradient. The protein is NADH-quinone oxidoreductase subunit I of Rhodococcus erythropolis (strain PR4 / NBRC 100887).